Reading from the N-terminus, the 248-residue chain is Acetoacetyl-CoA reductase (248 aa).

Residues 14–16 (GGI), R42, and 90–94 (NAGIT) each bind NADP(+). Residues D96 and 149-152 (QFGQ) contribute to the substrate site. Y155 (proton acceptor) is an active-site residue. 185–188 (PGYT) contacts NADP(+). Residues 186–187 (GY) and R197 contribute to the substrate site.

This sequence belongs to the short-chain dehydrogenases/reductases (SDR) family.

The protein resides in the cytoplasm. It catalyses the reaction a (3R)-3-hydroxyacyl-CoA + NADP(+) = a 3-oxoacyl-CoA + NADPH + H(+). It participates in biopolymer metabolism; poly-(R)-3-hydroxybutanoate biosynthesis. The chain is Acetoacetyl-CoA reductase (phaB) from Acinetobacter sp. (strain RA3849).